An 82-amino-acid polypeptide reads, in one-letter code: Small ribosomal subunit protein bS18 (82 aa).

Belongs to the bacterial ribosomal protein bS18 family. Part of the 30S ribosomal subunit. Forms a tight heterodimer with protein bS6.

In terms of biological role, binds as a heterodimer with protein bS6 to the central domain of the 16S rRNA, where it helps stabilize the platform of the 30S subunit. The polypeptide is Small ribosomal subunit protein bS18 (Rhizobium meliloti (strain 1021) (Ensifer meliloti)).